Consider the following 92-residue polypeptide: Small ribosomal subunit protein uS19 (92 aa).

It belongs to the universal ribosomal protein uS19 family.

In terms of biological role, protein S19 forms a complex with S13 that binds strongly to the 16S ribosomal RNA. The chain is Small ribosomal subunit protein uS19 from Buchnera aphidicola subsp. Baizongia pistaciae (strain Bp).